A 341-amino-acid chain; its full sequence is S-adenosylmethionine:tRNA ribosyltransferase-isomerase (341 aa).

It belongs to the QueA family. As to quaternary structure, monomer.

Its subcellular location is the cytoplasm. The catalysed reaction is 7-aminomethyl-7-carbaguanosine(34) in tRNA + S-adenosyl-L-methionine = epoxyqueuosine(34) in tRNA + adenine + L-methionine + 2 H(+). Its pathway is tRNA modification; tRNA-queuosine biosynthesis. Transfers and isomerizes the ribose moiety from AdoMet to the 7-aminomethyl group of 7-deazaguanine (preQ1-tRNA) to give epoxyqueuosine (oQ-tRNA). This Clostridium kluyveri (strain NBRC 12016) protein is S-adenosylmethionine:tRNA ribosyltransferase-isomerase.